Consider the following 168-residue polypeptide: Transcription antitermination protein NusB (168 aa).

The segment at 147-168 is disordered; it reads RGLINNSSRNTSRSEEKHSTEK. Positions 158–168 are enriched in basic and acidic residues; the sequence is SRSEEKHSTEK.

This sequence belongs to the NusB family.

Functionally, involved in transcription antitermination. Required for transcription of ribosomal RNA (rRNA) genes. Binds specifically to the boxA antiterminator sequence of the ribosomal RNA (rrn) operons. The sequence is that of Transcription antitermination protein NusB from Chlorobium phaeobacteroides (strain BS1).